We begin with the raw amino-acid sequence, 224 residues long: Cysteine S-methyltransferase NleE (224 aa).

The interaction with host proteins TAB2, TAB3 and ZRANB3 stretch occupies residues 49-52 (GITR). The S-adenosyl-L-methionine site is built by A92, S98, R107, Q111, Y204, and E208.

Belongs to the NleE/OspZ family. As to quaternary structure, monomer.

It localises to the secreted. The protein localises to the host nucleus. It catalyses the reaction L-cysteinyl-[protein] + S-adenosyl-L-methionine = S-methyl-L-cysteinyl-[protein] + S-adenosyl-L-homocysteine + H(+). Cysteine methyltransferase effector that inhibits host cell NF-kappa-B activation by preventing nuclear translocation of host protein RELA/p65. Acts by mediating cysteine methylation of host proteins TAB2 and TAB3: methylation of a conserved cysteine residue of the RanBP2-type zinc finger (NZF) of TAB2 and TAB3 disrupts zinc-binding, thereby inactivating the ubiquitin chain-binding activity of TAB2 and TAB3, leading to NF-kappa-B inactivation. Also mediates cysteine methylation of host protein ZRANB3, inactivating its ability to bind ubiquitin chains. The chain is Cysteine S-methyltransferase NleE from Escherichia coli O157:H7.